A 207-amino-acid polypeptide reads, in one-letter code: Varv peptide A/Kalata-B1 (207 aa).

A signal peptide spans 1–20 (MKMFIVLVLSAAFALPAAFA). Residues 21-66 (TEQDVITLQAYEELLKNGAANGMTKTVISSPVLEEALVSYSKNKLG) constitute a propeptide that is removed on maturation. A cross-link (cyclopeptide (Gly-Asn)) is located at residues 67-95 (GLPVCGETCVGGTCNTPGCSCSWPVCTRN). Disulfide bonds link Cys-71-Cys-85, Cys-75-Cys-87, and Cys-80-Cys-92. Positions 96 to 120 (SLESTKSANPLLEEALTAFAKKGLG) are excised as a propeptide. The segment at residues 121-149 (GLPVCGETCVGGTCNTPGCTCSWPVCTRN) is a cross-link (cyclopeptide (Gly-Asn)). 3 disulfide bridges follow: Cys-125–Cys-139, Cys-129–Cys-141, and Cys-134–Cys-146. A propeptide spanning residues 150–174 (ALETQKPNHLLEEALVAFAKKGNLG) is cleaved from the precursor. The cyclopeptide (Gly-Asn) cross-link spans 175-203 (GLPVCGETCVGGTCNTPGCSCSWPVCTRN). Cystine bridges form between Cys-179–Cys-193, Cys-183–Cys-195, and Cys-188–Cys-200. A propeptide spanning residues 204–207 (ALAM) is cleaved from the precursor.

The protein belongs to the cyclotide family. Moebius subfamily. In terms of processing, varv peptide A and kalata-B1 are cyclic peptides.

Its function is as follows. Probably participates in a plant defense mechanism. Has hemolytic activity. The protein is Varv peptide A/Kalata-B1 of Viola odorata (Sweet violet).